Here is a 134-residue protein sequence, read N- to C-terminus: Profilin-4 (134 aa).

Residues Cys-13 and Cys-118 are joined by a disulfide bond. The Involved in PIP2 interaction signature appears at 84-100 (AVIRGKKGSGGITIKKT). Thr-114 carries the phosphothreonine modification.

This sequence belongs to the profilin family. As to quaternary structure, occurs in many kinds of cells as a complex with monomeric actin in a 1:1 ratio. Phosphorylated by MAP kinases.

It is found in the cytoplasm. The protein localises to the cytoskeleton. Its function is as follows. Binds to actin and affects the structure of the cytoskeleton. At high concentrations, profilin prevents the polymerization of actin, whereas it enhances it at low concentrations. The sequence is that of Profilin-4 from Olea europaea (Common olive).